Here is a 373-residue protein sequence, read N- to C-terminus: Probable tRNA sulfurtransferase (373 aa).

The THUMP domain occupies 54–158 (NKNIEELSKV…NDVAYFYYKI (105 aa)). ATP contacts are provided by residues 176–177 (LF), 201–202 (NF), K256, G278, and Q287.

Belongs to the ThiI family.

It localises to the cytoplasm. The enzyme catalyses [ThiI sulfur-carrier protein]-S-sulfanyl-L-cysteine + a uridine in tRNA + 2 reduced [2Fe-2S]-[ferredoxin] + ATP + H(+) = [ThiI sulfur-carrier protein]-L-cysteine + a 4-thiouridine in tRNA + 2 oxidized [2Fe-2S]-[ferredoxin] + AMP + diphosphate. It carries out the reaction [ThiS sulfur-carrier protein]-C-terminal Gly-Gly-AMP + S-sulfanyl-L-cysteinyl-[cysteine desulfurase] + AH2 = [ThiS sulfur-carrier protein]-C-terminal-Gly-aminoethanethioate + L-cysteinyl-[cysteine desulfurase] + A + AMP + 2 H(+). It participates in cofactor biosynthesis; thiamine diphosphate biosynthesis. Its function is as follows. Catalyzes the ATP-dependent transfer of a sulfur to tRNA to produce 4-thiouridine in position 8 of tRNAs, which functions as a near-UV photosensor. Also catalyzes the transfer of sulfur to the sulfur carrier protein ThiS, forming ThiS-thiocarboxylate. This is a step in the synthesis of thiazole, in the thiamine biosynthesis pathway. The sulfur is donated as persulfide by IscS. The chain is Probable tRNA sulfurtransferase from Saccharolobus islandicus (strain L.S.2.15 / Lassen #1) (Sulfolobus islandicus).